We begin with the raw amino-acid sequence, 243 residues long: Chromosome partition protein MukE (243 aa).

A disordered region spans residues 214 to 243 (DSLALEKQADLNEVDDNDELEDELDDEEHA). The span at 225–243 (NEVDDNDELEDELDDEEHA) shows a compositional bias: acidic residues.

The protein belongs to the MukE family. In terms of assembly, interacts, and probably forms a ternary complex, with MukF and MukB. The complex formation is stimulated by calcium or magnesium.

Its subcellular location is the cytoplasm. The protein localises to the nucleoid. Involved in chromosome condensation, segregation and cell cycle progression. May participate in facilitating chromosome segregation by condensation DNA from both sides of a centrally located replisome during cell division. Probably acts via its interaction with MukB and MukF. The chain is Chromosome partition protein MukE from Pasteurella multocida (strain Pm70).